We begin with the raw amino-acid sequence, 245 residues long: Endogenous retrovirus group K member 5 Env polyprotein (245 aa).

A truncated surface protein region spans residues 1 to 245; the sequence is MVTPVTWMDN…TLEFGLEIKL (245 aa).

Belongs to the beta type-B retroviral envelope protein family. HERV class-II K(HML-2) env subfamily. In terms of tissue distribution, expressed in lung, placenta, testis, peripheral blood lymphocytes, and teratocarcinoma cell lines.

It localises to the virion. Functionally, retroviral envelope proteins mediate receptor recognition and membrane fusion during early infection. Endogenous envelope proteins may have kept, lost or modified their original function during evolution. This is Endogenous retrovirus group K member 5 Env polyprotein (ERVK-5) from Homo sapiens (Human).